The sequence spans 705 residues: Effector protein AvrPphDPsv (705 aa).

A compositionally biased stretch (polar residues) spans M1 to P15. Disordered stretches follow at residues M1–S40 and R175–S205.

It localises to the secreted. Its function is as follows. Effector protein involved in non-host recognition. This chain is Effector protein AvrPphDPsv (avrPphDPsv), found in Pseudomonas savastanoi (Pseudomonas syringae pv. savastanoi).